The sequence spans 145 residues: Antiholin-like protein LrgA (145 aa).

4 consecutive transmembrane segments (helical) span residues 13-30 (FFHQ…SKII), 40-62 (GSVI…LGEV), 69-91 (LTNN…LGVI), and 95-117 (PFLI…GYVT).

It belongs to the CidA/LrgA family. LrgA subfamily.

The protein localises to the cell membrane. In terms of biological role, inhibits the expression or activity of extracellular murein hydrolases by interacting, possibly with LrgB, with the holin-like proteins CidA and/or CidB. The LrgAB and CidAB proteins may affect the proton motive force of the membrane. May be involved in programmed cell death (PCD), possibly triggering PCD in response to antibiotics and environmental stresses. This Staphylococcus aureus (strain MW2) protein is Antiholin-like protein LrgA.